Reading from the N-terminus, the 73-residue chain is Beta-defensin 39 (73 aa).

Positions 1-23 are cleaved as a signal peptide; sequence MKISCFLLLVLSLSCFQINSVSG. 3 disulfide bridges follow: cysteine 29/cysteine 58, cysteine 36/cysteine 51, and cysteine 41/cysteine 59.

This sequence belongs to the beta-defensin family.

It localises to the secreted. Its function is as follows. Has antibacterial activity. This Rattus norvegicus (Rat) protein is Beta-defensin 39 (Defb39).